Here is a 218-residue protein sequence, read N- to C-terminus: Small ribosomal subunit protein uS3c (218 aa).

In terms of domain architecture, KH type-2 spans 47–118 (VQKNMRTSSG…KLNIAVTRIA (72 aa)).

The protein belongs to the universal ribosomal protein uS3 family. As to quaternary structure, part of the 30S ribosomal subunit.

The protein localises to the plastid. It is found in the chloroplast. This is Small ribosomal subunit protein uS3c (rps3) from Atropa belladonna (Belladonna).